Consider the following 96-residue polypeptide: Small ribosomal subunit protein bS6 (96 aa).

The protein belongs to the bacterial ribosomal protein bS6 family.

Functionally, binds together with bS18 to 16S ribosomal RNA. The protein is Small ribosomal subunit protein bS6 of Streptococcus mutans serotype c (strain ATCC 700610 / UA159).